A 517-amino-acid polypeptide reads, in one-letter code: ADP-ribosylation factor GTPase-activating protein 3 (517 aa).

In terms of domain architecture, Arf-GAP spans 10–126; it reads LTIFKRLRSV…IKALASQATR (117 aa). Residues 25-48 form a C4-type zinc finger; sequence CFDCGAKNPSWASITYGVFLCIDC. The segment at 139–200 is disordered; it reads VPPSSPPPKE…EQGPSVEGLN (62 aa). Polar residues predominate over residues 159-176; the sequence is EVSSTGWASAQPEPSLTP. Ser-231 carries the post-translational modification Phosphoserine. Positions 243–263 form a coiled coil; that stretch reads NEIEKQAQAVDKMNAQEDLLS. 2 positions are modified to phosphoserine: Ser-271 and Ser-275. Residues 291–305 are compositionally biased toward basic and acidic residues; it reads EKMNMSGKKKAESER. Disordered regions lie at residues 291 to 349 and 362 to 422; these read EKMN…SDDS and MELR…QKKF. Residues 312–333 are compositionally biased toward polar residues; sequence NSRSGISHSVTSDMQTIEQETP. Ser-371 is modified (phosphoserine). Residues 379–390 show a composition bias toward basic and acidic residues; that stretch reads YWKKETIKDTDP. Residues Ser-429, Ser-452, Ser-454, Ser-456, Ser-458, and Ser-459 each carry the phosphoserine modification.

Its subcellular location is the cytoplasm. It is found in the golgi apparatus membrane. Its activity is regulated as follows. GAP activity stimulated by phosphatidylinositol 4,5-bisphosphate (PIP2). GTPase-activating protein (GAP) for ADP ribosylation factor 1 (ARF1). Hydrolysis of ARF1-bound GTP may lead to dissociation of coatomer from Golgi-derived membranes to allow fusion with target membranes. The chain is ADP-ribosylation factor GTPase-activating protein 3 from Bos taurus (Bovine).